The following is a 147-amino-acid chain: F420H(2)-dependent reductase Rv1155 (147 aa).

Residues glutamine 32, glutamine 37, serine 50, 56-60 (AKTRN), 77-79 (WSY), and histidine 138 each bind coenzyme F420-(gamma-Glu)n.

It belongs to the F420H(2)-dependent biliverdin reductase family. Homodimer.

Its function is as follows. F420H(2)-dependent reductase able to catalyze the reduction of biliverdin-IXalpha to bilirubin-IXalpha in vitro. However, kinetic parameters show that it is less efficient than the biliverdin reductase Rv2074 and suggest biliverdin-IXalpha is unlikely to be the native substrate of Rv1155, which probably catalyzes the reduction of an alternative molecule in vivo. Binds coenzyme F420, but does not bind FMN or other flavins. Cannot use pyridoxine 5'-phosphate, pyridoxamine 5'-phosphate, pyridoxal 5'-phosphate (PLP), the anti-tuberculosis drug PA-824 or aflatoxin analogs as substrates. This chain is F420H(2)-dependent reductase Rv1155, found in Mycobacterium tuberculosis (strain ATCC 25618 / H37Rv).